The chain runs to 1382 residues: Hepatocyte growth factor receptor (1382 aa).

The N-terminal stretch at 1–24 (MKAPAVLAPGILVLLFTLVPRSHG) is a signal peptide. Topologically, residues 25-933 (ECKEALVKSE…VIVQPDQNFM (909 aa)) are extracellular. In terms of domain architecture, Sema spans 27 to 516 (KEALVKSEMN…TGNKITKIPL (490 aa)). The N-linked (GlcNAc...) asparagine glycan is linked to N45. Cystine bridges form between C95–C101, C98–C160, C133–C141, and C173–C176. An N-linked (GlcNAc...) asparagine glycan is attached at N106. N-linked (GlcNAc...) asparagine glycosylation is found at N203 and N359. 2 cysteine pairs are disulfide-bonded: C299–C364 and C386–C398. N-linked (GlcNAc...) asparagine glycans are attached at residues N400 and N406. 4 disulfide bridges follow: C521–C539, C527–C562, C530–C546, and C542–C552. 3 consecutive IPT/TIG domains span residues 564–656 (PAIY…FSYV), 658–740 (PVIT…FSYR), and 743–837 (PIVD…LTYV). T583 is a glycosylation site (O-linked (Man) threonine). N-linked (GlcNAc...) asparagine glycans are attached at residues N608, N614, and N636. O-linked (Man) threonine glycosylation is found at T677 and T762. N-linked (GlcNAc...) asparagine glycosylation is found at N786 and N880. Residues 934–956 (GLIVGGVSISIILLLLLGLFLWL) traverse the membrane as a helical segment. The Cytoplasmic portion of the chain corresponds to 957–1382 (KKKKRIKDLG…QDNVDGTVDT (426 aa)). S967 is subject to Phosphoserine. Residue T978 is modified to Phosphothreonine. Phosphoserine is present on residues S991, S998, and S1001. Y1004 carries the phosphotyrosine modification. The 268-residue stretch at 1079 to 1346 (VHFSEVIGRG…RISTIFSTFI (268 aa)) folds into the Protein kinase domain. ATP contacts are provided by residues 1085–1093 (IGRGHFGCV) and K1111. The Proton acceptor role is filled by D1205. Residues 1213 to 1382 (LDEKFTVKVA…QDNVDGTVDT (170 aa)) form an interaction with RANBP9 region. Y1231 is subject to Phosphotyrosine. Phosphotyrosine; by autocatalysis occurs at positions 1235 and 1236. T1290 carries the post-translational modification Phosphothreonine. Residues 1321–1360 (WHPKAEMRPSFSELVSRISTIFSTFIGEHYVHVNATYVNV) are interaction with MUC20. Residues Y1350 and Y1357 each carry the phosphotyrosine; by autocatalysis modification. Y1366 carries the phosphotyrosine modification.

Belongs to the protein kinase superfamily. Tyr protein kinase family. Heterodimer made of an alpha chain (50 kDa) and a beta chain (145 kDa) which are disulfide linked. Binds PLXNB1. Interacts when phosphorylated with downstream effectors including STAT3, PIK3R1, SRC, PCLG1, GRB2 and GAB1. Interacts with SPSB1, SPSB2 and SPSB4. Interacts with INPP5D/SHIP1. When phosphorylated at Tyr-1357, interacts with INPPL1/SHIP2. Interacts with RANBP9 and RANBP10, as well as SPSB1, SPSB2, SPSB3 and SPSB4. SPSB1 binding occurs in the presence and in the absence of HGF, however HGF treatment has a positive effect on this interaction. Interacts with MUC20; prevents interaction with GRB2 and suppresses hepatocyte growth factor-induced cell proliferation. Interacts with GRB10. Interacts with PTPN1 and PTPN2. Interacts with HSP90AA1 and HSP90AB1; the interaction suppresses MET kinase activity. Interacts with tensin TNS3. Interacts (when phosphorylated) with tensin TNS4 (via SH2 domain); the interaction increases MET protein stability by inhibiting MET endocytosis and subsequent lysosomal degradation. In terms of processing, autophosphorylated in response to ligand binding on Tyr-1235 and Tyr-1236 in the kinase domain leading to further phosphorylation of Tyr-1350 and Tyr-1357 in the C-terminal multifunctional docking site. Dephosphorylated by PTPRJ at Tyr-1350 and Tyr-1366. Dephosphorylated by PTPN1 and PTPN2. Post-translationally, ubiquitinated. Ubiquitination by CBL regulates the receptor stability and activity through proteasomal degradation. O-mannosylation of IPT/TIG domains by TMEM260 is required for protein maturation. O-mannosylated residues are composed of single mannose glycans that are not elongated or modified.

It is found in the membrane. It catalyses the reaction L-tyrosyl-[protein] + ATP = O-phospho-L-tyrosyl-[protein] + ADP + H(+). Its activity is regulated as follows. In its inactive state, the C-terminal tail interacts with the catalytic domain and inhibits the kinase activity. Upon ligand binding, the C-terminal tail is displaced and becomes phosphorylated, thus increasing the kinase activity. Its function is as follows. Receptor tyrosine kinase that transduces signals from the extracellular matrix into the cytoplasm by binding to hepatocyte growth factor/HGF ligand. Regulates many physiological processes including proliferation, scattering, morphogenesis and survival. Ligand binding at the cell surface induces autophosphorylation of MET on its intracellular domain that provides docking sites for downstream signaling molecules. Following activation by ligand, interacts with the PI3-kinase subunit PIK3R1, PLCG1, SRC, GRB2, STAT3 or the adapter GAB1. Recruitment of these downstream effectors by MET leads to the activation of several signaling cascades including the RAS-ERK, PI3 kinase-AKT, or PLCgamma-PKC. The RAS-ERK activation is associated with the morphogenetic effects while PI3K/AKT coordinates prosurvival effects. During embryonic development, MET signaling plays a role in gastrulation, development and migration of muscles and neuronal precursors, angiogenesis and kidney formation. In adults, participates in wound healing as well as organ regeneration and tissue remodeling. Also promotes differentiation and proliferation of hematopoietic cells. In Oryctolagus cuniculus (Rabbit), this protein is Hepatocyte growth factor receptor (MET).